The following is a 195-amino-acid chain: Imidazoleglycerol-phosphate dehydratase (195 aa).

The protein belongs to the imidazoleglycerol-phosphate dehydratase family.

Its subcellular location is the cytoplasm. It catalyses the reaction D-erythro-1-(imidazol-4-yl)glycerol 3-phosphate = 3-(imidazol-4-yl)-2-oxopropyl phosphate + H2O. The protein operates within amino-acid biosynthesis; L-histidine biosynthesis; L-histidine from 5-phospho-alpha-D-ribose 1-diphosphate: step 6/9. The chain is Imidazoleglycerol-phosphate dehydratase from Deinococcus radiodurans (strain ATCC 13939 / DSM 20539 / JCM 16871 / CCUG 27074 / LMG 4051 / NBRC 15346 / NCIMB 9279 / VKM B-1422 / R1).